Consider the following 120-residue polypeptide: MARVKRGVTSHAKHKKVFEAAKGFYGRRKNTIRAAKSAVERSMQYAYRDRKVKKRNFRALWIQRINAGVRALDLDLTYSRFIDGLGKAGIEVDRKVLSDIAIHEPDAFKALVEKAKAALA.

This sequence belongs to the bacterial ribosomal protein bL20 family.

Its function is as follows. Binds directly to 23S ribosomal RNA and is necessary for the in vitro assembly process of the 50S ribosomal subunit. It is not involved in the protein synthesizing functions of that subunit. This Xanthobacter autotrophicus (strain ATCC BAA-1158 / Py2) protein is Large ribosomal subunit protein bL20.